The sequence spans 458 residues: MTQNTQLTIIGGGMAGSEAAWQAANLGVNVRLIEMRPKVETFAHRTGNLAEMVCSNSFRSDDSEQNAVGLLHWEMRAANSVIMHTADSHKLPAGGALAVDRDPFAEAVTAKLHAHPNIEITYGEVTDLPAAGPTIIATGPLTGSALADAIAREAGQDALAFFDAIAPIVYADSIDMDIAWRQSRYDKGDTLEEQQAYINCPLTRDQYEAFIDALLSADKTQFKDGETAGYFDGCLPIEVMAERGRETLRFGPMKPVGLTNPHDPQTKAYAVVQLRRDNALGTLYNIVGFQTKMTYGAQKQVFAMIPGLQEASFARLGGIHRNTFINSPTLLDDQMRLRSKPHIRFAGQITGVEGYVESASMGLLAGRMAAAEILGETLPDLPDTTAMGALVTHITGGADAKTFQPMNVNFGLFPPVEGLKGGRRGRKDRYKAYTDRAKAAWTNWLTPQTSLGGSQAAE.

11–16 (GGGMAG) is an FAD binding site.

The protein belongs to the MnmG family. TrmFO subfamily. Requires FAD as cofactor.

The protein resides in the cytoplasm. The catalysed reaction is uridine(54) in tRNA + (6R)-5,10-methylene-5,6,7,8-tetrahydrofolate + NADH + H(+) = 5-methyluridine(54) in tRNA + (6S)-5,6,7,8-tetrahydrofolate + NAD(+). It carries out the reaction uridine(54) in tRNA + (6R)-5,10-methylene-5,6,7,8-tetrahydrofolate + NADPH + H(+) = 5-methyluridine(54) in tRNA + (6S)-5,6,7,8-tetrahydrofolate + NADP(+). In terms of biological role, catalyzes the folate-dependent formation of 5-methyl-uridine at position 54 (M-5-U54) in all tRNAs. In Jannaschia sp. (strain CCS1), this protein is Methylenetetrahydrofolate--tRNA-(uracil-5-)-methyltransferase TrmFO.